We begin with the raw amino-acid sequence, 644 residues long: Exoribonuclease 2 (644 aa).

Residues 189-516 (REDLTSLDFV…NHRLLKAVIK (328 aa)) enclose the RNB domain. Residues 561–643 (GTRFAAEIVD…ETRSIIARPV (83 aa)) form the S1 motif domain.

Belongs to the RNR ribonuclease family. RNase II subfamily.

The protein localises to the cytoplasm. The catalysed reaction is Exonucleolytic cleavage in the 3'- to 5'-direction to yield nucleoside 5'-phosphates.. Functionally, involved in mRNA degradation. Hydrolyzes single-stranded polyribonucleotides processively in the 3' to 5' direction. This chain is Exoribonuclease 2, found in Shigella flexneri serotype 5b (strain 8401).